The sequence spans 167 residues: Ubiquitin-fold modifier-conjugating enzyme 1 (167 aa).

Catalysis depends on cysteine 116, which acts as the Glycyl thioester intermediate. A Glycyl lysine isopeptide (Lys-Gly) (interchain with G-Cter in UFM1) cross-link involves residue lysine 122.

Belongs to the ubiquitin-conjugating enzyme family. UFC1 subfamily. In terms of assembly, interacts with UBA5 (via C-terminus). Interacts with UFL1. Interacts with UFM1. Interacts with KIRREL3. Ufmylated at Lys-122. Deufmylated by UFSP1.

E2-like enzyme which specifically catalyzes the second step in ufmylation. Accepts the ubiquitin-like modifier UFM1 from the E1 enzyme UBA5 and forms an intermediate with UFM1 via a thioester linkage. Ufmylation is involved in various processes, such as ribosome recycling, response to DNA damage, interferon response or reticulophagy (also called ER-phagy). This chain is Ubiquitin-fold modifier-conjugating enzyme 1, found in Homo sapiens (Human).